The chain runs to 802 residues: Phenylalanine--tRNA ligase beta subunit (802 aa).

Positions 38–148 constitute a tRNA-binding domain; it reads SKNFERVIVG…SEVPVGTDIS (111 aa). The 76-residue stretch at 403-478 folds into the B5 domain; the sequence is VIQKKIFVLK…RVFGYHNIPA (76 aa). 3 residues coordinate Mg(2+): D456, D462, and D466. The 94-residue stretch at 703–796 folds into the FDX-ACB domain; the sequence is SLYPRCSRDI…LQEKFNAILR (94 aa).

Belongs to the phenylalanyl-tRNA synthetase beta subunit family. Type 1 subfamily. Tetramer of two alpha and two beta subunits. The cofactor is Mg(2+).

The protein localises to the cytoplasm. It carries out the reaction tRNA(Phe) + L-phenylalanine + ATP = L-phenylalanyl-tRNA(Phe) + AMP + diphosphate + H(+). The chain is Phenylalanine--tRNA ligase beta subunit from Buchnera aphidicola subsp. Baizongia pistaciae (strain Bp).